The chain runs to 205 residues: High frequency lysogenization protein HflD homolog (205 aa).

The protein belongs to the HflD family.

It localises to the cytoplasm. The protein resides in the cell inner membrane. This Aliivibrio fischeri (strain MJ11) (Vibrio fischeri) protein is High frequency lysogenization protein HflD homolog.